Consider the following 127-residue polypeptide: Putative adhesin P1-like protein MPN_203 (127 aa).

The disordered stretch occupies residues 70–90 (TENFTQPQPQPQALKTTTPVF).

It belongs to the adhesin P1 family.

The sequence is that of Putative adhesin P1-like protein MPN_203 from Mycoplasma pneumoniae (strain ATCC 29342 / M129 / Subtype 1) (Mycoplasmoides pneumoniae).